The following is a 142-amino-acid chain: Neuritin (142 aa).

The signal sequence occupies residues 1–27 (MGLKLNGRYISLILAVQIAYLVQAVRA). Gly116 carries GPI-anchor amidated glycine lipidation. A propeptide spans 117–142 (AAGSLLPAFPVLLVSLSAALATWLSF) (removed in mature form).

It belongs to the neuritin family. As to quaternary structure, component of the outer core of AMPAR complex. AMPAR complex consists of an inner core made of 4 pore-forming GluA/GRIA proteins (GRIA1, GRIA2, GRIA3 and GRIA4) and 4 major auxiliary subunits arranged in a twofold symmetry. One of the two pairs of distinct binding sites is occupied either by CNIH2, CNIH3 or CACNG2, CACNG3. The other harbors CACNG2, CACNG3, CACNG4, CACNG8 or GSG1L. This inner core of AMPAR complex is complemented by outer core constituents binding directly to the GluA/GRIA proteins at sites distinct from the interaction sites of the inner core constituents. Outer core constituents include at least PRRT1, PRRT2, CKAMP44/SHISA9, FRRS1L and NRN1. The proteins of the inner and outer core serve as a platform for other, more peripherally associated AMPAR constituents. Alone or in combination, these auxiliary subunits control the gating and pharmacology of the AMPAR complex and profoundly impact their biogenesis and protein processing.

Its subcellular location is the cell membrane. The protein localises to the synapse. In terms of biological role, promotes neurite outgrowth and especially branching of neuritic processes in primary hippocampal and cortical cells. The sequence is that of Neuritin (NRN1) from Homo sapiens (Human).